The primary structure comprises 347 residues: NADH-ubiquinone oxidoreductase chain 2 (347 aa).

Helical transmembrane passes span 5–22 (ILAI…MVLI), 26–45 (WLTI…PILM), 60–80 (FLTQ…NLLL), 150–170 (NPNL…WGGL), 178–198 (ILAY…TYNP), 200–220 (LMLL…MLFM), 237–257 (LPLI…LPPL), 274–294 (DMAI…YFYM), and 327–347 (PPLI…LTLF).

It belongs to the complex I subunit 2 family. As to quaternary structure, core subunit of respiratory chain NADH dehydrogenase (Complex I) which is composed of 45 different subunits. Interacts with TMEM242.

Its subcellular location is the mitochondrion inner membrane. The catalysed reaction is a ubiquinone + NADH + 5 H(+)(in) = a ubiquinol + NAD(+) + 4 H(+)(out). In terms of biological role, core subunit of the mitochondrial membrane respiratory chain NADH dehydrogenase (Complex I) which catalyzes electron transfer from NADH through the respiratory chain, using ubiquinone as an electron acceptor. Essential for the catalytic activity and assembly of complex I. This is NADH-ubiquinone oxidoreductase chain 2 from Martes zibellina (Sable).